A 205-amino-acid polypeptide reads, in one-letter code: Holliday junction branch migration complex subunit RuvA (205 aa).

The segment at 1–67 (MITSIFGKVT…QIIEEAFAFN (67 aa)) is domain I. Residues 68–146 (TLEEKEWFCR…NNKNIKGVQV (79 aa)) are domain II. Residues 147 to 150 (ADGY) are flexible linker. A domain III region spans residues 150–205 (YDELFETLKSLGYKQQEIQDALKMIEVKPDFDISQLVAEVIKLMSFKNNEITNKTA).

Belongs to the RuvA family. As to quaternary structure, homotetramer. Forms an RuvA(8)-RuvB(12)-Holliday junction (HJ) complex. HJ DNA is sandwiched between 2 RuvA tetramers; dsDNA enters through RuvA and exits via RuvB. An RuvB hexamer assembles on each DNA strand where it exits the tetramer. Each RuvB hexamer is contacted by two RuvA subunits (via domain III) on 2 adjacent RuvB subunits; this complex drives branch migration. In the full resolvosome a probable DNA-RuvA(4)-RuvB(12)-RuvC(2) complex forms which resolves the HJ.

It is found in the cytoplasm. In terms of biological role, the RuvA-RuvB-RuvC complex processes Holliday junction (HJ) DNA during genetic recombination and DNA repair, while the RuvA-RuvB complex plays an important role in the rescue of blocked DNA replication forks via replication fork reversal (RFR). RuvA specifically binds to HJ cruciform DNA, conferring on it an open structure. The RuvB hexamer acts as an ATP-dependent pump, pulling dsDNA into and through the RuvAB complex. HJ branch migration allows RuvC to scan DNA until it finds its consensus sequence, where it cleaves and resolves the cruciform DNA. The protein is Holliday junction branch migration complex subunit RuvA of Mycoplasma genitalium (strain ATCC 33530 / DSM 19775 / NCTC 10195 / G37) (Mycoplasmoides genitalium).